The following is a 153-amino-acid chain: Biogenesis of lysosome-related organelles complex 1 subunit 1 (153 aa).

A compositionally biased stretch (basic and acidic residues) spans 1–11 (MAPGSRGERSS). Residues 1-27 (MAPGSRGERSSFRSRRGPGVPSPQPDV) form a disordered region. A coiled-coil region spans residues 27–59 (VTMLSRLLKEHQAKQNERKELQEKRRREAITAA).

Belongs to the BLOC1S1 family. In terms of assembly, component of the biogenesis of lysosome-related organelles complex 1 (BLOC-1) composed of BLOC1S1, BLOC1S2, BLOC1S3, BLOC1S4, BLOC1S5, BLOC1S6, DTNBP1/BLOC1S7 and SNAPIN/BLOC1S8. Octamer composed of one copy each BLOC1S1, BLOC1S2, BLOC1S3, BLOC1S4, BLOC1S5, BLOC1S6, DTNBP1/BLOC1S7 and SNAPIN/BLOC1S8. The BLOC-1 complex associates with the AP-3 protein complex and membrane protein cargos. Component of the BLOC-one-related complex (BORC) which is composed of BLOC1S1, BLOC1S2, BORCS5, BORCS6, BORCS7, BORCS8, KXD1 and SNAPIN. Interacts with ATP5F1A and NDUFA9; involved in their acetylation on lysine residues. Interacts with KXD1.

Its subcellular location is the mitochondrion intermembrane space. The protein resides in the mitochondrion matrix. It localises to the cytoplasm. The protein localises to the cytosol. It is found in the lysosome membrane. It catalyses the reaction L-lysyl-[protein] + acetyl-CoA = N(6)-acetyl-L-lysyl-[protein] + CoA + H(+). Its function is as follows. Component of the BLOC-1 complex, a complex that is required for normal biogenesis of lysosome-related organelles (LRO), such as platelet dense granules and melanosomes. In concert with the AP-3 complex, the BLOC-1 complex is required to target membrane protein cargos into vesicles assembled at cell bodies for delivery into neurites and nerve terminals. The BLOC-1 complex, in association with SNARE proteins, is also proposed to be involved in neurite extension. As part of the BORC complex may play a role in lysosomes movement and localization at the cell periphery. Associated with the cytosolic face of lysosomes, the BORC complex may recruit ARL8B and couple lysosomes to microtubule plus-end-directed kinesin motor. In terms of biological role, acts as a protein acetyltransferase. Negatively regulates aerobic respiration through mitochondrial protein lysine-acetylation. May counteract the action of the deacetylase SIRT3 by acetylating and regulating proteins of the mitochondrial respiratory chain including ATP5F1A and NDUFA9. Acts as a regulator of mTORC2 signaling in response to hypotoxic stress by mediating acetylation of RICTOR, thereby protecting RICTOR against ubiquitination and subsequent degradation by the proteasome. The chain is Biogenesis of lysosome-related organelles complex 1 subunit 1 (BLOC1S1) from Homo sapiens (Human).